A 250-amino-acid polypeptide reads, in one-letter code: Proteasome subunit alpha type-7-like (250 aa).

Ser132 carries an O-linked (GlcNAc) serine glycan.

It belongs to the peptidase T1A family. As to quaternary structure, the 26S proteasome consists of a 20S proteasome core and two 19S regulatory subunits. The 20S proteasome core is a barrel-shaped complex made of 28 subunits that are arranged in four stacked rings. The two outer rings are each formed by seven alpha subunits, and the two inner rings are formed by seven beta subunits. The proteolytic activity is exerted by three beta-subunits PSMB5, PSMB6 and PSMB7. PSMA7 interacts directly with the PSMG1-PSMG2 heterodimer which promotes 20S proteasome assembly. Interacts with HIF1A. Interacts with RAB7A. Interacts with PRKN. Interacts with ABL1 and ABL2. Interacts with EMAP2. Interacts with MAVS.

It is found in the cytoplasm. The protein localises to the nucleus. Component of the 20S core proteasome complex involved in the proteolytic degradation of most intracellular proteins. This complex plays numerous essential roles within the cell by associating with different regulatory particles. Associated with two 19S regulatory particles, forms the 26S proteasome and thus participates in the ATP-dependent degradation of ubiquitinated proteins. The 26S proteasome plays a key role in the maintenance of protein homeostasis by removing misfolded or damaged proteins that could impair cellular functions, and by removing proteins whose functions are no longer required. Associated with the PA200 or PA28, the 20S proteasome mediates ubiquitin-independent protein degradation. This type of proteolysis is required in several pathways including spermatogenesis (20S-PA200 complex) or generation of a subset of MHC class I-presented antigenic peptides (20S-PA28 complex). Inhibits the transactivation function of HIF-1A under both normoxic and hypoxia-mimicking conditions. The interaction with EMAP2 increases the proteasome-mediated HIF-1A degradation under the hypoxic conditions. Plays a role in hepatitis C virus internal ribosome entry site-mediated translation. Mediates nuclear translocation of the androgen receptor (AR) and thereby enhances androgen-mediated transactivation. Promotes MAVS degradation and thereby negatively regulates MAVS-mediated innate immune response. The chain is Proteasome subunit alpha type-7-like (PSMA7L) from Macaca fascicularis (Crab-eating macaque).